The primary structure comprises 594 residues: NADH-ubiquinone oxidoreductase chain 5 (594 aa).

15 helical membrane-spanning segments follow: residues 1-21 (MNLF…PIMM), 43-63 (AFLI…EMII), 87-107 (IVFA…SMWY), 114-134 (INQF…LVTA), 137-157 (LFQL…LIGW), 171-191 (AILY…WFLS), 211-233 (LPLM…HPWL), 241-261 (TPVS…FLLI), 272-292 (LMQT…AMCA), 301-320 (IIAF…IGIN), 325-347 (AFLH…GSII), 366-386 (MPFT…VPFL), 409-429 (LLIT…IIFF), 457-477 (LMAG…PMTT), and 486-506 (LKMT…EITL).

The protein belongs to the complex I subunit 5 family. Core subunit of respiratory chain NADH dehydrogenase (Complex I) which is composed of 45 different subunits.

It is found in the mitochondrion inner membrane. It catalyses the reaction a ubiquinone + NADH + 5 H(+)(in) = a ubiquinol + NAD(+) + 4 H(+)(out). Core subunit of the mitochondrial membrane respiratory chain NADH dehydrogenase (Complex I) which catalyzes electron transfer from NADH through the respiratory chain, using ubiquinone as an electron acceptor. Essential for the catalytic activity and assembly of complex I. The chain is NADH-ubiquinone oxidoreductase chain 5 (MT-ND5) from Hippopotamus amphibius (Hippopotamus).